Reading from the N-terminus, the 361-residue chain is Queuine tRNA-ribosyltransferase (361 aa).

Asp92 functions as the Proton acceptor in the catalytic mechanism. Substrate is bound by residues 92–96, Asp146, Gln189, and Gly216; that span reads DSGGF. The interval 247–253 is RNA binding; the sequence is GVGKPAD. The active-site Nucleophile is Asp266. The segment at 271–275 is RNA binding; important for wobble base 34 recognition; it reads TRSGR. Residues Cys304, Cys306, Cys309, and His335 each coordinate Zn(2+).

Belongs to the queuine tRNA-ribosyltransferase family. As to quaternary structure, homodimer. Within each dimer, one monomer is responsible for RNA recognition and catalysis, while the other monomer binds to the replacement base PreQ1. Zn(2+) is required as a cofactor.

It carries out the reaction 7-aminomethyl-7-carbaguanine + guanosine(34) in tRNA = 7-aminomethyl-7-carbaguanosine(34) in tRNA + guanine. It functions in the pathway tRNA modification; tRNA-queuosine biosynthesis. Functionally, catalyzes the base-exchange of a guanine (G) residue with the queuine precursor 7-aminomethyl-7-deazaguanine (PreQ1) at position 34 (anticodon wobble position) in tRNAs with GU(N) anticodons (tRNA-Asp, -Asn, -His and -Tyr). Catalysis occurs through a double-displacement mechanism. The nucleophile active site attacks the C1' of nucleotide 34 to detach the guanine base from the RNA, forming a covalent enzyme-RNA intermediate. The proton acceptor active site deprotonates the incoming PreQ1, allowing a nucleophilic attack on the C1' of the ribose to form the product. After dissociation, two additional enzymatic reactions on the tRNA convert PreQ1 to queuine (Q), resulting in the hypermodified nucleoside queuosine (7-(((4,5-cis-dihydroxy-2-cyclopenten-1-yl)amino)methyl)-7-deazaguanosine). This Rickettsia peacockii (strain Rustic) protein is Queuine tRNA-ribosyltransferase.